Here is a 346-residue protein sequence, read N- to C-terminus: UDP-3-O-acylglucosamine N-acyltransferase (346 aa).

His240 functions as the Proton acceptor in the catalytic mechanism.

It belongs to the transferase hexapeptide repeat family. LpxD subfamily. In terms of assembly, homotrimer.

The catalysed reaction is a UDP-3-O-[(3R)-3-hydroxyacyl]-alpha-D-glucosamine + a (3R)-hydroxyacyl-[ACP] = a UDP-2-N,3-O-bis[(3R)-3-hydroxyacyl]-alpha-D-glucosamine + holo-[ACP] + H(+). It participates in bacterial outer membrane biogenesis; LPS lipid A biosynthesis. Its function is as follows. Catalyzes the N-acylation of UDP-3-O-acylglucosamine using 3-hydroxyacyl-ACP as the acyl donor. Is involved in the biosynthesis of lipid A, a phosphorylated glycolipid that anchors the lipopolysaccharide to the outer membrane of the cell. This is UDP-3-O-acylglucosamine N-acyltransferase from Bacteroides thetaiotaomicron (strain ATCC 29148 / DSM 2079 / JCM 5827 / CCUG 10774 / NCTC 10582 / VPI-5482 / E50).